Here is a 623-residue protein sequence, read N- to C-terminus: Protein EDS1 (623 aa).

N-acetylalanine is present on Ala-2. Ser-123 serves as the catalytic Nucleophile. Active-site charge relay system residues include Asp-187 and His-317. A coiled-coil region spans residues 358-383 (VQAALEEEKKRVENQKKIIQVIEQER).

In terms of assembly, homodimer. Interacts with RPS4, RPS6, SNC1, SRFR1, AvrRps4 and HopA1. Part of a nuclear complex made of EDS1, PAD4 and SAG101, that can be redirected to the cytoplasm in the presence of an extranuclear form of EDS1. Interacts (via N-terminus) with PAD4 (via N-terminus). Interacts (via N-terminus) with SAG101. EDS1-SAG101 and EDS1-PAD4 form separate complexes in pathogen-unchallenged cells. Part of a nuclear protein complex made of VICTR, PAD4 and EDS1. Interacts with VICTR.

The protein resides in the nucleus. The protein localises to the cytoplasm. It is found in the microsome. Functionally, positive regulator of basal resistance and of effector-triggered immunity specifically mediated by TIR-NB-LRR (TNL) resistance proteins. Disruption by bacterial effector of EDS1-TIR-NB-LRR resistance protein interactions constitutes the first step in resistance activation. Acts redundantly with salicylic acid to regulate resistance gene-mediated signaling. Triggers early plant defenses and hypersensitive response independently of PAD4, and then recruits PAD4 to potentiate plant defenses through the accumulation of salicylic acid. Nuclear localization is essential for basal and TNL-conditioned immunity and for reprogramming defense gene expression, while cytoplasmic EDS1 is required to induce a complete immune response. Heterodimerization with PAD4 and/or SGA101 is necessary for TNL-mediated effector-triggered immunity. Contributes to nonhost resistance against E.amylovora. Loss of EDS1-PAD4 interaction compromises basal but not TNL-triggered resistance. Necessary for systemic acquired resistance (SAR) signal generation and perception. Has no direct lipase activity. Putative lipase activity is dispensable for immune functions. The protein is Protein EDS1 of Arabidopsis thaliana (Mouse-ear cress).